The chain runs to 339 residues: Glucokinase (339 aa).

16 to 21 (GDIGGT) contacts ATP.

The protein belongs to the bacterial glucokinase family.

The protein resides in the cytoplasm. The enzyme catalyses D-glucose + ATP = D-glucose 6-phosphate + ADP + H(+). This is Glucokinase from Sinorhizobium medicae (strain WSM419) (Ensifer medicae).